Here is a 145-residue protein sequence, read N- to C-terminus: UPF0735 ACT domain-containing protein CKL_0858 (145 aa).

One can recognise an ACT domain in the interval 69 to 144; that stretch reads TLGLTLAHKA…SVIKVNLAAV (76 aa).

The protein belongs to the UPF0735 family.

The sequence is that of UPF0735 ACT domain-containing protein CKL_0858 from Clostridium kluyveri (strain ATCC 8527 / DSM 555 / NBRC 12016 / NCIMB 10680 / K1).